A 366-amino-acid polypeptide reads, in one-letter code: Quinolinate synthase (366 aa).

Positions 44 and 61 each coordinate iminosuccinate. Position 108 (Cys-108) interacts with [4Fe-4S] cluster. Residues 139-141 and Ser-160 contribute to the iminosuccinate site; that span reads YVN. Cys-228 serves as a coordination point for [4Fe-4S] cluster. Residues 254–256 and Thr-271 each bind iminosuccinate; that span reads HPE. Residue Cys-318 participates in [4Fe-4S] cluster binding.

This sequence belongs to the quinolinate synthase family. Type 3 subfamily. [4Fe-4S] cluster serves as cofactor.

It is found in the cytoplasm. It catalyses the reaction iminosuccinate + dihydroxyacetone phosphate = quinolinate + phosphate + 2 H2O + H(+). It participates in cofactor biosynthesis; NAD(+) biosynthesis; quinolinate from iminoaspartate: step 1/1. Its function is as follows. Catalyzes the condensation of iminoaspartate with dihydroxyacetone phosphate to form quinolinate. The chain is Quinolinate synthase from Staphylococcus carnosus (strain TM300).